Here is an 862-residue protein sequence, read N- to C-terminus: Linoleate 9S-lipoxygenase 1 (862 aa).

Residues 44-171 form the PLAT domain; it reads FGAATDIVGG…SYKRDRIFFA (128 aa). Residues 174 to 862 enclose the Lipoxygenase domain; the sequence is TYLPNETPAS…FRGIPNSISI (689 aa). The disordered stretch occupies residues 225–257; the sequence is KNLARTTLGGSSDFPYPRRGRTGRKSTRKDPKC. The span at 242-251 shows a compositional bias: basic residues; it reads RRGRTGRKST. The Fe cation site is built by His522, His527, His713, Asn717, and Ile862.

It belongs to the lipoxygenase family. Monomer. It depends on Fe cation as a cofactor.

It localises to the cytoplasm. The catalysed reaction is (9Z,12Z)-octadecadienoate + O2 = (13S)-hydroperoxy-(9Z,11E)-octadecadienoate. It carries out the reaction (9Z,12Z,15Z)-octadecatrienoate + O2 = (13S)-hydroperoxy-(9Z,11E,15Z)-octadecatrienoate. The enzyme catalyses (9Z,12Z)-octadecadienoate + O2 = (9S)-hydroperoxy-(10E,12Z)-octadecadienoate. The protein operates within lipid metabolism; oxylipin biosynthesis. In terms of biological role, plant lipoxygenase may be involved in a number of diverse aspects of plant physiology including growth and development, pest resistance, and senescence or responses to wounding. It catalyzes the hydroperoxidation of lipids containing a cis,cis-1,4-pentadiene structure. This chain is Linoleate 9S-lipoxygenase 1 (LOXA), found in Phaseolus vulgaris (Kidney bean).